Reading from the N-terminus, the 499-residue chain is tRNA-specific adenosine deaminase 1 (499 aa).

Residues 63 to 498 (SMGTGTKCIG…IRNPPDYHQF (436 aa)) form the A to I editase domain. H87 provides a ligand contact to Zn(2+). Catalysis depends on E89, which acts as the Proton donor. 1D-myo-inositol hexakisphosphate is bound by residues R93 and R94. A Zn(2+)-binding site is contributed by C142. Disordered stretches follow at residues 170 to 194 (PVQE…SPVA) and 212 to 237 (HHGT…EPDA). Basic and acidic residues predominate over residues 178–187 (EDSKDKRNCE). At S191 the chain carries Phosphoserine. C294 contributes to the Zn(2+) binding site. The 1D-myo-inositol hexakisphosphate site is built by K297, R300, K430, and K466.

Belongs to the ADAT1 family. It depends on 1D-myo-inositol hexakisphosphate as a cofactor.

The enzyme catalyses adenosine(37) in tRNA(Ala) + H2O + H(+) = inosine(37) in tRNA(Ala) + NH4(+). Its function is as follows. Specifically deaminates adenosine-37 to inosine in tRNA-Ala. This chain is tRNA-specific adenosine deaminase 1 (Adat1), found in Mus musculus (Mouse).